The sequence spans 929 residues: uncharacterized protein (929 aa).

The disordered stretch occupies residues 1-257 (MARKGKVNTL…SVLSSDDNDS (257 aa)). A compositionally biased stretch (basic and acidic residues) spans 23-34 (KQLENKILHSYE). Composition is skewed to acidic residues over residues 35–50 (EESA…DNDE), 59–75 (SEDD…DEED), 107–117 (LNEEDDSDDSV), 133–144 (DENELVDLDTLL), and 188–220 (SESE…DGEN). 3 positions are modified to phosphoserine: serine 251, serine 555, and serine 557. Positions 602-729 (DEMQAFEDEL…KADKKNHKLK (128 aa)) are disordered. The segment covering 605-619 (QAFEDELAGVPNEDD) has biased composition (acidic residues). Positions 670 to 681 (NKPEMKEGQKKA) are enriched in basic and acidic residues. Residues 696–711 (ETNPWLQVPDQRTSSA) are compositionally biased toward polar residues. The segment covering 712–729 (KKLDKNSSKADKKNHKLK) has biased composition (basic and acidic residues). 3 positions are modified to phosphoserine: serine 758, serine 760, and serine 764. The span at 805–820 (KEDWVQEDAPKEEDHS) shows a compositional bias: basic and acidic residues. The disordered stretch occupies residues 805–843 (KEDWVQEDAPKEEDHSLPGWGSWGGVGVKQRKTKPKVKK). Residues 833–843 (KQRKTKPKVKK) show a composition bias toward basic residues.

It to yeast YML093w.

Its subcellular location is the nucleus. It localises to the nucleolus. This is an uncharacterized protein from Schizosaccharomyces pombe (strain 972 / ATCC 24843) (Fission yeast).